Here is a 57-residue protein sequence, read N- to C-terminus: Large ribosomal subunit protein bL32 (57 aa).

Positions 1 to 20 are enriched in basic residues; sequence MAVPKKKTSKGKRNQRHAVW. Positions 1 to 23 are disordered; it reads MAVPKKKTSKGKRNQRHAVWKAK.

This sequence belongs to the bacterial ribosomal protein bL32 family.

This chain is Large ribosomal subunit protein bL32, found in Prochlorococcus marinus (strain SARG / CCMP1375 / SS120).